A 186-amino-acid polypeptide reads, in one-letter code: Ribosome-recycling factor (186 aa).

This sequence belongs to the RRF family.

The protein resides in the cytoplasm. Functionally, responsible for the release of ribosomes from messenger RNA at the termination of protein biosynthesis. May increase the efficiency of translation by recycling ribosomes from one round of translation to another. This is Ribosome-recycling factor from Chlorobium phaeovibrioides (strain DSM 265 / 1930) (Prosthecochloris vibrioformis (strain DSM 265)).